We begin with the raw amino-acid sequence, 207 residues long: dITP/XTP pyrophosphatase (207 aa).

Residue 11 to 16 (TGNPGK) participates in substrate binding. Asp-72 serves as the catalytic Proton acceptor. Position 72 (Asp-72) interacts with Mg(2+). Residues Ser-73, 154–157 (FGYD), Lys-177, and 182–183 (HR) contribute to the substrate site.

Belongs to the HAM1 NTPase family. As to quaternary structure, homodimer. Mg(2+) serves as cofactor.

The enzyme catalyses XTP + H2O = XMP + diphosphate + H(+). It carries out the reaction dITP + H2O = dIMP + diphosphate + H(+). It catalyses the reaction ITP + H2O = IMP + diphosphate + H(+). Its function is as follows. Pyrophosphatase that catalyzes the hydrolysis of nucleoside triphosphates to their monophosphate derivatives, with a high preference for the non-canonical purine nucleotides XTP (xanthosine triphosphate), dITP (deoxyinosine triphosphate) and ITP. Seems to function as a house-cleaning enzyme that removes non-canonical purine nucleotides from the nucleotide pool, thus preventing their incorporation into DNA/RNA and avoiding chromosomal lesions. The protein is dITP/XTP pyrophosphatase of Thermus thermophilus (strain ATCC 27634 / DSM 579 / HB8).